A 260-amino-acid polypeptide reads, in one-letter code: Serine/threonine-protein acetyltransferase NGR_a02610 (260 aa).

Catalysis depends on residues His123 and Glu143. His123 is a binding site for CoA. A CoA-binding site is contributed by 180–181 (KS). Cys185 is a catalytic residue.

Belongs to the acetyltransferase YopJ family.

It carries out the reaction L-threonyl-[protein] + acetyl-CoA = O-acetyl-L-threonyl-[protein] + CoA. It catalyses the reaction L-seryl-[protein] + acetyl-CoA = O-acetyl-L-seryl-[protein] + CoA. Its function is as follows. Serine/threonine-protein acetyltransferase translocated into infected cells, which mediates acetylation of serine and threonine residues of host target proteins. This chain is Serine/threonine-protein acetyltransferase NGR_a02610, found in Sinorhizobium fredii (strain NBRC 101917 / NGR234).